Here is a 209-residue protein sequence, read N- to C-terminus: Tumor suppressor candidate gene 1 protein (209 aa).

Disordered stretches follow at residues 1–55 (MWRM…DGAR), 111–157 (ALRL…LRAR), and 172–209 (LHLE…GPWL). A compositionally biased stretch (gly residues) spans 14-47 (CCGGDGAADGRGPGRSGRARGGGSPSGGGGGVGW). Residues 70–114 (LEAIRARDEWDRQNARLRQENARLRLENRRLKRENRSLFRQALRL) adopt a coiled-coil conformation. Over residues 125–149 (EARRVPEEASTNRRARDSGREDEPG) the composition is skewed to basic and acidic residues. At S150 the chain carries Phosphoserine. Residues 152-177 (RALRARLEKLEAMYRRALLQLHLEQR) are a coiled coil. Residues 174 to 188 (LEQRGPRPSGDKEEQ) show a composition bias toward basic and acidic residues.

As to expression, widely expressed at low level. Expressed at higher level in testis, weakly expressed in muscle, colon, lung and spleen. Not detected in 3 non small cell lung carcinoma (NSCLC) cell lines with homozygous deletion of the 9p region, while it is down-regulated in 3 other tumor cell lines.

The sequence is that of Tumor suppressor candidate gene 1 protein (TUSC1) from Homo sapiens (Human).